The chain runs to 372 residues: Queuine tRNA-ribosyltransferase (372 aa).

Catalysis depends on D92, which acts as the Proton acceptor. Substrate contacts are provided by residues 92–96 (DSGGY), D146, Q188, and G215. The RNA binding stretch occupies residues 246-252 (GIGSLKE). Residue D265 is the Nucleophile of the active site. The segment at 270–274 (TRLGR) is RNA binding; important for wobble base 34 recognition. Residues C303, C305, C308, and H334 each coordinate Zn(2+).

Belongs to the queuine tRNA-ribosyltransferase family. As to quaternary structure, homodimer. Within each dimer, one monomer is responsible for RNA recognition and catalysis, while the other monomer binds to the replacement base PreQ1. It depends on Zn(2+) as a cofactor.

It carries out the reaction 7-aminomethyl-7-carbaguanine + guanosine(34) in tRNA = 7-aminomethyl-7-carbaguanosine(34) in tRNA + guanine. It participates in tRNA modification; tRNA-queuosine biosynthesis. Its function is as follows. Catalyzes the base-exchange of a guanine (G) residue with the queuine precursor 7-aminomethyl-7-deazaguanine (PreQ1) at position 34 (anticodon wobble position) in tRNAs with GU(N) anticodons (tRNA-Asp, -Asn, -His and -Tyr). Catalysis occurs through a double-displacement mechanism. The nucleophile active site attacks the C1' of nucleotide 34 to detach the guanine base from the RNA, forming a covalent enzyme-RNA intermediate. The proton acceptor active site deprotonates the incoming PreQ1, allowing a nucleophilic attack on the C1' of the ribose to form the product. After dissociation, two additional enzymatic reactions on the tRNA convert PreQ1 to queuine (Q), resulting in the hypermodified nucleoside queuosine (7-(((4,5-cis-dihydroxy-2-cyclopenten-1-yl)amino)methyl)-7-deazaguanosine). The polypeptide is Queuine tRNA-ribosyltransferase (Prochlorococcus marinus (strain MIT 9515)).